The sequence spans 21 residues: Ocellatin-4 (21 aa).

Residue isoleucine 21 is modified to Isoleucine amide.

As to expression, expressed by the skin dorsal glands.

Its subcellular location is the secreted. Its function is as follows. Has hemolytic activity against human erythrocytes (HC50=14.3 uM). Has antibacterial activity against the Gram-positive bacterium S.aureus ATCC 25923 (MIC=64 uM) and the Gram-negative bacterium E.coli ATCC 25922 (MIC=64 uM). The protein is Ocellatin-4 of Leptodactylus ocellatus (Argus frog).